Consider the following 261-residue polypeptide: uncharacterized protein (261 aa).

Residues 1–22 (MGYSKRFALYISVMILIFAIAG) form the signal peptide. The N-palmitoyl cysteine moiety is linked to residue Cys23. The S-diacylglycerol cysteine moiety is linked to residue Cys23.

This sequence belongs to the staphylococcal tandem lipoprotein family.

The protein localises to the cell membrane. This is an uncharacterized protein from Staphylococcus aureus (strain N315).